The following is a 92-amino-acid chain: PqqA binding protein (92 aa).

Belongs to the PqqD family. In terms of assembly, monomer. Interacts with PqqE.

The protein operates within cofactor biosynthesis; pyrroloquinoline quinone biosynthesis. Functions as a PqqA binding protein and presents PqqA to PqqE, in the pyrroloquinoline quinone (PQQ) biosynthetic pathway. This chain is PqqA binding protein, found in Azotobacter vinelandii (strain DJ / ATCC BAA-1303).